The chain runs to 344 residues: L-rhamnose-proton symporter (344 aa).

10 helical membrane passes run 4 to 24, 38 to 58, 68 to 88, 101 to 121, 137 to 157, 175 to 195, 214 to 234, 259 to 279, 290 to 310, and 321 to 341; these read AITMGIFWHLIGAASAACFYA, WSVGGIVSWLILPWTISALLL, FNLSTLLPVFLFGAMWGIGNI, MGIGIAIGITLIVGTLMTPII, TLLGVFVALIGVGIVTRAGQL, LLLAVICGIFSAGMSFAMNAA, LPSYVVIMGGGALVNLGFCFI, ILLSALGGLMWYLQFFFYAWG, MSWMLHMSFYVLCGGLVGLVL, and VAVLSLGCVVIIIAANIVGLG.

The protein belongs to the L-rhamnose transporter (TC 2.A.7.6) family.

It localises to the cell inner membrane. It catalyses the reaction L-rhamnopyranose(in) + H(+)(in) = L-rhamnopyranose(out) + H(+)(out). In terms of biological role, uptake of L-rhamnose across the cytoplasmic membrane with the concomitant transport of protons into the cell (symport system). This is L-rhamnose-proton symporter from Salmonella paratyphi A (strain ATCC 9150 / SARB42).